Consider the following 412-residue polypeptide: FAD-dependent monooxygenase nscC (412 aa).

An N-terminal signal peptide occupies residues 1 to 21 (MGKQQETILIIGAGIAGLTTS). Residues Glu35 and Ala46 each coordinate FAD. An N-linked (GlcNAc...) asparagine glycan is attached at Asn92. Arg119 contributes to the FAD binding site. Residues Asn170 and Asn231 are each glycosylated (N-linked (GlcNAc...) asparagine). Positions 326 and 339 each coordinate FAD.

It belongs to the paxM FAD-dependent monooxygenase family. FAD serves as cofactor.

Its pathway is secondary metabolite biosynthesis. FAD-dependent monooxygenase; part of the gene cluster that mediates the biosynthesis of neosartoricin B, a prenylated anthracenone that probably exhibits T-cell antiproliferative activity, suggestive of a physiological role as an immunosuppressive agent. The non-reducing polyketide synthase nscA probably synthesizes and cyclizes the decaketide backbone. The hydrolase nscB then mediates the product release through hydrolysis followed by spontaneous decarboxylation. The prenyltransferase nscD catalyzes the addition of the dimethylallyl group to the aromatic C5. The FAD-dependent monooxygenase nscC is then responsible for the stereospecific hydroxylation at C2. Neosartoricin B can be converted into two additional compounds neosartoricins C and D. Neosartoricin C is a spirocyclic compound that is cyclized through the attack of C3 hydroxyl on C14, followed by dehydration. On the other hand, neosartoricin D is a further cyclized compound in which attack of C2 on C14 in neosartoricin C results in the formation of the acetal-containing dioxabicyclo-octanone ring. Both of these compounds are novel and possibly represent related metabolites of the gene cluster. The polypeptide is FAD-dependent monooxygenase nscC (Arthroderma benhamiae (strain ATCC MYA-4681 / CBS 112371) (Trichophyton mentagrophytes)).